Consider the following 354-residue polypeptide: Alternative oxidase, mitochondrial (354 aa).

Residues 1-64 (MNSMSTTGPI…RFISSTPQSQ (64 aa)) constitute a mitochondrion transit peptide. The helical transmembrane segment at 153–173 (FVFLESVAGVPGMVGGMLRHL) threads the bilayer. Fe cation contacts are provided by Glu157, Glu196, and His199. The helical transmembrane segment at 215–235 (LMVLGAQGVFFNGFFLSYLIS) threads the bilayer. The Fe cation site is built by Glu247, Glu302, and His305. The segment at 333 to 354 (KPHPGKGIKHLKTTGWEREEVV) is disordered. The span at 335 to 344 (HPGKGIKHLK) shows a compositional bias: basic residues.

The protein belongs to the alternative oxidase family. It depends on Fe cation as a cofactor.

Its subcellular location is the mitochondrion inner membrane. Functionally, catalyzes cyanide-resistant oxygen consumption. May increase respiration when the cytochrome respiratory pathway is restricted, or in response to low temperatures. This is Alternative oxidase, mitochondrial (alxA) from Emericella nidulans (strain FGSC A4 / ATCC 38163 / CBS 112.46 / NRRL 194 / M139) (Aspergillus nidulans).